Reading from the N-terminus, the 70-residue chain is Protein FlmC (70 aa).

In terms of biological role, component of a type I toxin-antitoxin (TA) system. Either this protein or sequences upstream of it are required for translation of downstream flmA; this could be translationally coupled to flmA. The chain is Protein FlmC (flmC) from Escherichia coli (strain K12).